The sequence spans 1035 residues: Beta-galactosidase (1035 aa).

Substrate is bound by residues Asn-109 and Asp-208. Asp-208 lines the Na(+) pocket. Positions 424, 426, and 469 each coordinate Mg(2+). Residues Glu-469 and 545 to 548 (EYAH) each bind substrate. Glu-469 (proton donor) is an active-site residue. The Nucleophile role is filled by Glu-545. Residue Asn-605 participates in Mg(2+) binding. Positions 609 and 612 each coordinate Na(+). Residues Asn-612 and Trp-1011 each coordinate substrate.

This sequence belongs to the glycosyl hydrolase 2 family. Homotetramer. The cofactor is Mg(2+). Na(+) is required as a cofactor.

The catalysed reaction is Hydrolysis of terminal non-reducing beta-D-galactose residues in beta-D-galactosides.. This chain is Beta-galactosidase, found in Klebsiella pneumoniae (strain 342).